A 77-amino-acid polypeptide reads, in one-letter code: Large ribosomal subunit protein bL28 (77 aa).

Belongs to the bacterial ribosomal protein bL28 family.

This is Large ribosomal subunit protein bL28 from Polaromonas sp. (strain JS666 / ATCC BAA-500).